The following is a 339-amino-acid chain: DNA repair protein RAD51 homolog 1 (339 aa).

Residues 1-22 (MAMQMQLEASADTSVEEESFGP) are disordered. The residue at position 2 (Ala-2) is an N-acetylalanine. Thr-13 bears the Phosphothreonine mark. Residue Ser-14 is modified to Phosphoserine. Positions 48-77 (TVEAVAYAPKKELINIKGISEAKADKILTE) constitute a HhH domain. Tyr-54 is subject to Phosphotyrosine; by ABL1. Residues Lys-58 and Lys-64 each participate in a glycyl lysine isopeptide (Lys-Gly) (interchain with G-Cter in ubiquitin) cross-link. 127-134 (GEFRTGKT) contacts ATP. Positions 184 to 257 (DVLDNVAYAR…FLRMLLRLAD (74 aa)) are interaction with PALB2. Residues 245 to 260 (LARFLRMLLRLADEFG) carry the Nuclear export signal; masked by the interaction with BRCA2 motif. Phosphothreonine; by CHEK1 is present on Thr-309.

This sequence belongs to the RecA family. RAD51 subfamily. Forms linear homooligomers, giving rise to a RAD51 nucleoprotein filament, which is essential for strand-pairing reactions during DNA recombination. Interacts with BRCA1 and either directly or indirectly with p53. Interacts with XRCC3, RAD54L and RAD54B. Interacts with the BCDX2 subcomplex RAD51C:RAD51B. Component of the homologous recombination repair (HR) complex composed of ERCC5/XPG, BRCA2, PALB2, DSS1 and RAD51. Interacts directly with PALB2 which may serve as a scaffold for a HR complex containing PALB2, BRCA2, RAD51C, RAD51 and XRCC3. Interacts with RAD51AP1 and RAD51AP2. Interacts with CHEK1, and this may require prior phosphorylation of CHEK1. Interacts with the MND1-PSMC3IP heterodimer. Found in a complex, at least composed of BLM, RAD51 and SPIDR; the complex formation is mediated by SPIDR. Interacts with SPIDR; the interaction is direct and recruits RAD51 to DNA damage sites. Interacts with FIGNL1 (via N-terminal one-half region); the interaction is direct. Interacts with RAD51AP1 (via C-terminal region); the interaction is direct. Interacts with NABP2, RPA1, PALB2 and RAD51. Interacts with SWI5/C9orf119, and at lower level with SFR1/MEIR5. Interacts with hyperphosphorylated RPA2; this interaction is necessary for efficient recruitment to chromatin in response to DNA damage. Interacts with SWSAP1; involved in homologous recombination repair. Interacts with PARPBP, BRCA2 and RECQL5; these interactions interfere with the formation of the RAD51-DNA homologous recombination structure. Interacts with POLQ; POLQ acts as an inhibitor of homology-recombination repair (HR) pathway by limiting RAD51 accumulation at resected ends. Interacts with POLN. Interacts with FBH1. Interacts with RFWD3. Interacts with the MCM8-MCM9 complex; the interaction recruits RAD51 to DNA damage sites. Component of a multiprotein complex with MEIOB and SPATA22. Interacts with the complex BRME1:HSF2BP:BRCA2. Interacts with HELQ; stimulating HELQ DNA helicase activity and ability to unwing DNA. Interacts with MMS22L; the interaction is direct and promotes recruitment of RAD51 to sites of DNA damage. Interacts with the ATAD5 RFC-like complex. Within the ATAD5 RFC-like complex, interacts with ATAD5 (via N-terminus); the interaction is direct and enhanced under replication stress. Interacts with WDR48; the interaction is enhanced under replication stress. Interacts with DNA helicase ZGRF1; the interaction promotes RAD51 strand exchange activity. Interacts (when phosphorylated) with TOPBP1; interaction takes place following phosphorylation by CK2 and PLK1 and promotes recruitment to DNA damage sites. Interacts with GRB2; this interaction inhibits RAD51 ATPase activity to stabilize RAD51 on stalled replication forks. Post-translationally, ubiquitinated by the SCF(FBH1) E3 ubiquitin ligase complex, regulating RAD51 subcellular location and preventing its association with DNA. Ubiquitinated by RFWD3 in response to DNA damage: ubiquitination leads to degradation by the proteasome, promoting homologous recombination. In terms of processing, phosphorylation of Thr-309 by CHEK1 may enhance association with chromatin at sites of DNA damage and promote DNA repair by homologous recombination. Phosphorylated at Ser-14 by PLK1, triggering phosphorylation at Thr-13 by CK2, thereby promoting interaction with TOPBP1 and recruitment to DNA damage sites during S-phase. Phosphorylation by ABL1 inhibits function. In terms of tissue distribution, expressed in the testes (at protein level). Expressed in the brain (at protein level). Expressed in the thymus, spleen, ovary and small intestine.

It localises to the nucleus. The protein resides in the cytoplasm. The protein localises to the perinuclear region. It is found in the mitochondrion matrix. Its subcellular location is the chromosome. It localises to the cytoskeleton. The protein resides in the microtubule organizing center. The protein localises to the centrosome. In terms of biological role, plays an important role in homologous strand exchange, a key step in DNA repair through homologous recombination (HR). Binds to single-stranded DNA in an ATP-dependent manner to form nucleoprotein filaments which are essential for the homology search and strand exchange. Catalyzes the recognition of homology and strand exchange between homologous DNA partners to form a joint molecule between a processed DNA break and the repair template. Recruited to resolve stalled replication forks during replication stress. Part of a PALB2-scaffolded HR complex containing BRCA2 and RAD51C and which is thought to play a role in DNA repair by HR. Plays a role in regulating mitochondrial DNA copy number under conditions of oxidative stress in the presence of RAD51C and XRCC3. Also involved in interstrand cross-link repair. In Mus musculus (Mouse), this protein is DNA repair protein RAD51 homolog 1.